Here is a 464-residue protein sequence, read N- to C-terminus: Siroheme synthase (464 aa).

The interval Met-1–Leu-203 is precorrin-2 dehydrogenase /sirohydrochlorin ferrochelatase. NAD(+) contacts are provided by residues Glu-22 to Ile-23 and Pro-43 to Glu-44. Residue Ser-128 is modified to Phosphoserine. A uroporphyrinogen-III C-methyltransferase region spans residues Gly-216–Leu-464. Residue Pro-225 coordinates S-adenosyl-L-methionine. The active-site Proton acceptor is the Asp-248. The active-site Proton donor is Lys-270. S-adenosyl-L-methionine-binding positions include Gly-301–Asp-303, Ile-306, Thr-331–Ala-332, Met-383, and Gly-412.

The protein in the N-terminal section; belongs to the precorrin-2 dehydrogenase / sirohydrochlorin ferrochelatase family. It in the C-terminal section; belongs to the precorrin methyltransferase family.

It catalyses the reaction uroporphyrinogen III + 2 S-adenosyl-L-methionine = precorrin-2 + 2 S-adenosyl-L-homocysteine + H(+). It carries out the reaction precorrin-2 + NAD(+) = sirohydrochlorin + NADH + 2 H(+). The enzyme catalyses siroheme + 2 H(+) = sirohydrochlorin + Fe(2+). The protein operates within cofactor biosynthesis; adenosylcobalamin biosynthesis; precorrin-2 from uroporphyrinogen III: step 1/1. Its pathway is cofactor biosynthesis; adenosylcobalamin biosynthesis; sirohydrochlorin from precorrin-2: step 1/1. It functions in the pathway porphyrin-containing compound metabolism; siroheme biosynthesis; precorrin-2 from uroporphyrinogen III: step 1/1. It participates in porphyrin-containing compound metabolism; siroheme biosynthesis; siroheme from sirohydrochlorin: step 1/1. The protein operates within porphyrin-containing compound metabolism; siroheme biosynthesis; sirohydrochlorin from precorrin-2: step 1/1. Multifunctional enzyme that catalyzes the SAM-dependent methylations of uroporphyrinogen III at position C-2 and C-7 to form precorrin-2 via precorrin-1. Then it catalyzes the NAD-dependent ring dehydrogenation of precorrin-2 to yield sirohydrochlorin. Finally, it catalyzes the ferrochelation of sirohydrochlorin to yield siroheme. In Pseudomonas syringae pv. tomato (strain ATCC BAA-871 / DC3000), this protein is Siroheme synthase.